We begin with the raw amino-acid sequence, 338 residues long: GTP 3',8-cyclase (338 aa).

Positions 8-227 (KLQRPLKDLR…DMIHQVMPLE (220 aa)) constitute a Radical SAM core domain. Arginine 17 provides a ligand contact to GTP. [4Fe-4S] cluster-binding residues include cysteine 24 and cysteine 28. Residue tyrosine 30 participates in S-adenosyl-L-methionine binding. Cysteine 31 serves as a coordination point for [4Fe-4S] cluster. Position 71 (arginine 71) interacts with GTP. Glycine 75 contributes to the S-adenosyl-L-methionine binding site. A GTP-binding site is contributed by threonine 102. S-adenosyl-L-methionine is bound at residue serine 126. Lysine 163 lines the GTP pocket. Methionine 197 is an S-adenosyl-L-methionine binding site. 2 residues coordinate [4Fe-4S] cluster: cysteine 261 and cysteine 264. 266–268 (RAR) lines the GTP pocket. Cysteine 278 is a [4Fe-4S] cluster binding site.

The protein belongs to the radical SAM superfamily. MoaA family. In terms of assembly, monomer and homodimer. It depends on [4Fe-4S] cluster as a cofactor.

It catalyses the reaction GTP + AH2 + S-adenosyl-L-methionine = (8S)-3',8-cyclo-7,8-dihydroguanosine 5'-triphosphate + 5'-deoxyadenosine + L-methionine + A + H(+). It functions in the pathway cofactor biosynthesis; molybdopterin biosynthesis. Its function is as follows. Catalyzes the cyclization of GTP to (8S)-3',8-cyclo-7,8-dihydroguanosine 5'-triphosphate. This is GTP 3',8-cyclase from Bacillus anthracis (strain CDC 684 / NRRL 3495).